The chain runs to 292 residues: G1/S-specific cyclin-D3 (292 aa).

The Cyclin N-terminal domain maps to 27–152 (VLQSLLRLEE…LVLGKLKWDL (126 aa)). The interval 256-292 (REAAQTAPSPVPKAPRGSSSQGPSQTSTPTDVTAIHL) is disordered. Residues S264 and S279 each carry the phosphoserine modification. Low complexity predominate over residues 272-285 (GSSSQGPSQTSTPT). T283 is subject to Phosphothreonine.

It belongs to the cyclin family. Cyclin D subfamily. In terms of assembly, interacts with the CDK4 and CDK6 protein kinases to form a serine/threonine kinase holoenzyme complex. The cyclin subunit imparts substrate specificity to the complex. Interacts with ATF5. Interacts with EIF3K. Component of the ternary complex cyclin D/CDK4/CDKN1B required for nuclear translocation and modulation of CDK4-mediated kinase activity. Can form similar complexes with either CDKN1A or CDKN2A. Phosphorylation at Thr-283 by MAP kinases is required for ubiquitination and degradation by the DCX(AMBRA1) complex. Post-translationally, ubiquitinated by the DCX(AMBRA1) complex during the transition from G1 to S cell phase, leading to its degradation: ubiquitination is dependent on Thr-283 phosphorylation. The DCX(AMBRA1) complex represents the major regulator of CCND3 stability during the G1/S transition. Polyubiquitinated by the SCF(FBXL2) complex, leading to proteasomal degradation.

The protein resides in the nucleus. It localises to the cytoplasm. Its function is as follows. Regulatory component of the cyclin D3-CDK4 (DC) complex that phosphorylates and inhibits members of the retinoblastoma (RB) protein family including RB1 and regulates the cell-cycle during G(1)/S transition. Phosphorylation of RB1 allows dissociation of the transcription factor E2F from the RB/E2F complex and the subsequent transcription of E2F target genes which are responsible for the progression through the G(1) phase. Hypophosphorylates RB1 in early G(1) phase. Cyclin D-CDK4 complexes are major integrators of various mitogenenic and antimitogenic signals. Component of the ternary complex, cyclin D3/CDK4/CDKN1B, required for nuclear translocation and activity of the cyclin D-CDK4 complex. Shows transcriptional coactivator activity with ATF5 independently of CDK4. The protein is G1/S-specific cyclin-D3 of Mus musculus (Mouse).